The sequence spans 206 residues: GTP cyclohydrolase 1 (206 aa).

Residues cysteine 95, histidine 98, and cysteine 166 each contribute to the Zn(2+) site.

Belongs to the GTP cyclohydrolase I family. In terms of assembly, toroid-shaped homodecamer, composed of two pentamers of five dimers.

The enzyme catalyses GTP + H2O = 7,8-dihydroneopterin 3'-triphosphate + formate + H(+). It functions in the pathway cofactor biosynthesis; 7,8-dihydroneopterin triphosphate biosynthesis; 7,8-dihydroneopterin triphosphate from GTP: step 1/1. In Bartonella bacilliformis (strain ATCC 35685 / KC583 / Herrer 020/F12,63), this protein is GTP cyclohydrolase 1.